The primary structure comprises 663 residues: Probable methylenetetrahydrofolate reductase (NADPH) (663 aa).

Residue Glu76 is the Proton donor/acceptor of the active site. Residues 76–81 (EFFPPR) and 107–108 (TW) contribute to the NAD(+) site. Thr107 carries the post-translational modification Phosphothreonine. FAD-binding positions include 107-108 (TW), His141, 171-173 (RGD), 187-188 (RA), Tyr210, 214-217 (HPQA), Asp223, and Lys230. Asp173 is a binding site for substrate. Substrate is bound by residues Gln241, Tyr334, and Arg338. Phosphoserine is present on Ser408. Thr465 is modified (phosphothreonine). S-adenosyl-L-methionine contacts are provided by residues 477-480 (QPET), 497-501 (TVNSQ), Thr578, and Thr591.

This sequence belongs to the methylenetetrahydrofolate reductase family. The cofactor is FAD.

It carries out the reaction (6S)-5-methyl-5,6,7,8-tetrahydrofolate + NADP(+) = (6R)-5,10-methylene-5,6,7,8-tetrahydrofolate + NADPH + H(+). Its pathway is one-carbon metabolism; tetrahydrofolate interconversion. The chain is Probable methylenetetrahydrofolate reductase (NADPH) from Caenorhabditis elegans.